Consider the following 480-residue polypeptide: Ribosomal protein uS12 methylthiotransferase RimO (480 aa).

Residues 14–135 enclose the MTTase N-terminal domain; the sequence is LSVAMVTLGC…IAARLRSIVA (122 aa). 6 residues coordinate [4Fe-4S] cluster: Cys-23, Cys-59, Cys-98, Cys-193, Cys-197, and Cys-200. The 232-residue stretch at 179-410 folds into the Radical SAM core domain; that stretch reads LDDGPTAALK…DLVEELTSQR (232 aa). The 69-residue stretch at 412–480 folds into the TRAM domain; that stretch reads AERLGEQVEV…EGADLDARPL (69 aa).

Belongs to the methylthiotransferase family. RimO subfamily. [4Fe-4S] cluster is required as a cofactor.

Its subcellular location is the cytoplasm. It carries out the reaction L-aspartate(89)-[ribosomal protein uS12]-hydrogen + (sulfur carrier)-SH + AH2 + 2 S-adenosyl-L-methionine = 3-methylsulfanyl-L-aspartate(89)-[ribosomal protein uS12]-hydrogen + (sulfur carrier)-H + 5'-deoxyadenosine + L-methionine + A + S-adenosyl-L-homocysteine + 2 H(+). Its function is as follows. Catalyzes the methylthiolation of an aspartic acid residue of ribosomal protein uS12. This chain is Ribosomal protein uS12 methylthiotransferase RimO, found in Nocardioides sp. (strain ATCC BAA-499 / JS614).